Consider the following 318-residue polypeptide: O-glucosyltransferase LpsA (318 aa).

The protein belongs to the glycosyltransferase 90 family.

It participates in protein modification; protein glycosylation. Functionally, involved in lipopolysaccharide core biosynthesis. The chain is O-glucosyltransferase LpsA (lpsA) from Dichelobacter nodosus (Bacteroides nodosus).